The following is a 523-amino-acid chain: 2-isopropylmalate synthase (523 aa).

The Pyruvate carboxyltransferase domain maps to 5 to 267; it reads VIIFDTTLRD…HTAINHQEIW (263 aa). Positions 14, 202, 204, and 238 each coordinate Mn(2+). The interval 392–523 is regulatory domain; that stretch reads RLDYFSVQSG…QHNENNKETV (132 aa).

Belongs to the alpha-IPM synthase/homocitrate synthase family. LeuA type 1 subfamily. In terms of assembly, homodimer. It depends on Mn(2+) as a cofactor.

The protein localises to the cytoplasm. It catalyses the reaction 3-methyl-2-oxobutanoate + acetyl-CoA + H2O = (2S)-2-isopropylmalate + CoA + H(+). It functions in the pathway amino-acid biosynthesis; L-leucine biosynthesis; L-leucine from 3-methyl-2-oxobutanoate: step 1/4. Functionally, catalyzes the condensation of the acetyl group of acetyl-CoA with 3-methyl-2-oxobutanoate (2-ketoisovalerate) to form 3-carboxy-3-hydroxy-4-methylpentanoate (2-isopropylmalate). The sequence is that of 2-isopropylmalate synthase from Escherichia coli O45:K1 (strain S88 / ExPEC).